The sequence spans 305 residues: Mycothiol acetyltransferase (305 aa).

N-acetyltransferase domains lie at 10-153 (DRLD…LVVP) and 156-305 (ISLR…YARA). A 1D-myo-inositol 2-(L-cysteinylamino)-2-deoxy-alpha-D-glucopyranoside-binding site is contributed by Glu-38. 82–84 (LAV) is a binding site for acetyl-CoA. Residues Glu-183, Lys-225, and Glu-238 each coordinate 1D-myo-inositol 2-(L-cysteinylamino)-2-deoxy-alpha-D-glucopyranoside. Residues 242–244 (VAI) and 249–255 (QGRGLGR) each bind acetyl-CoA. Tyr-276 contacts 1D-myo-inositol 2-(L-cysteinylamino)-2-deoxy-alpha-D-glucopyranoside. Position 281-286 (281-286 (NESALH)) interacts with acetyl-CoA.

This sequence belongs to the acetyltransferase family. MshD subfamily. As to quaternary structure, monomer.

It catalyses the reaction 1D-myo-inositol 2-(L-cysteinylamino)-2-deoxy-alpha-D-glucopyranoside + acetyl-CoA = mycothiol + CoA + H(+). In terms of biological role, catalyzes the transfer of acetyl from acetyl-CoA to desacetylmycothiol (Cys-GlcN-Ins) to form mycothiol. This Rhodococcus jostii (strain RHA1) protein is Mycothiol acetyltransferase.